We begin with the raw amino-acid sequence, 252 residues long: Small ribosomal subunit protein uS2 (252 aa).

A disordered region spans residues 231 to 252; sequence SVESTAQEQVEETAQEETAVEA. The segment covering 239–252 has biased composition (acidic residues); the sequence is QVEETAQEETAVEA.

It belongs to the universal ribosomal protein uS2 family.

This is Small ribosomal subunit protein uS2 from Acetivibrio thermocellus (strain ATCC 27405 / DSM 1237 / JCM 9322 / NBRC 103400 / NCIMB 10682 / NRRL B-4536 / VPI 7372) (Clostridium thermocellum).